Consider the following 311-residue polypeptide: Bifunctional protein FolD (311 aa).

174–176 (GKG) provides a ligand contact to NADP(+).

The protein belongs to the tetrahydrofolate dehydrogenase/cyclohydrolase family. In terms of assembly, homodimer.

It catalyses the reaction (6R)-5,10-methylene-5,6,7,8-tetrahydrofolate + NADP(+) = (6R)-5,10-methenyltetrahydrofolate + NADPH. The catalysed reaction is (6R)-5,10-methenyltetrahydrofolate + H2O = (6R)-10-formyltetrahydrofolate + H(+). It functions in the pathway one-carbon metabolism; tetrahydrofolate interconversion. Functionally, catalyzes the oxidation of 5,10-methylenetetrahydrofolate to 5,10-methenyltetrahydrofolate and then the hydrolysis of 5,10-methenyltetrahydrofolate to 10-formyltetrahydrofolate. The chain is Bifunctional protein FolD from Pyrobaculum aerophilum (strain ATCC 51768 / DSM 7523 / JCM 9630 / CIP 104966 / NBRC 100827 / IM2).